A 491-amino-acid chain; its full sequence is Katanin p60 ATPase-containing subunit A1 (491 aa).

An interaction with KATNB1 region spans residues 1 to 29 (MSLLMITENVKLAREYALLGNYDSAMVYY). Residues 1–75 (MSLLMITENV…VKEIMKTLES (75 aa)) are interaction with dynein and NDEL1. Residues 1–185 (MSLLMITENV…EPEANKFDST (185 aa)) form an interaction with microtubules region. S42 carries the phosphoserine; by DYRK2 modification. The tract at residues 87 to 183 (QHELPSSEGE…VTEPEANKFD (97 aa)) is disordered. Residues 145–169 (HSDRGKAVRSREKKEQSKGREEKNK) show a composition bias toward basic and acidic residues. 249-256 (GPPGTGKT) is a binding site for ATP.

The protein belongs to the AAA ATPase family. Katanin p60 subunit A1 subfamily. As to quaternary structure, can homooligomerize into hexameric rings, which may be promoted by interaction with microtubules. Interacts with KATNB1, which may serve as a targeting subunit. Interacts with ASPM; the katanin complex formation KATNA1:KATNB1 is required for the association of ASPM. Interacts with dynein and NDEL1. Associates with the E3 ligase complex containing DYRK2, EDD/UBR5, DDB1 and DCAF1 proteins (EDVP complex). Interacts with KLHL42 (via the kelch domains). Interacts with CUL3; the interaction is enhanced by KLHL42. Interacts with KATNB1 and KATNBL1. Post-translationally, phosphorylation by DYRK2 triggers ubiquitination and subsequent degradation. Ubiquitinated by the BCR(KLHL42) E3 ubiquitin ligase complex, leading to its proteasomal degradation. Ubiquitinated by the EDVP E3 ligase complex and subsequently targeted for proteasomal degradation.

The protein resides in the cytoplasm. It is found in the midbody. The protein localises to the cytoskeleton. It localises to the microtubule organizing center. Its subcellular location is the centrosome. The protein resides in the spindle pole. It is found in the spindle. It catalyses the reaction n ATP + n H2O + a microtubule = n ADP + n phosphate + (n+1) alpha/beta tubulin heterodimers.. ATPase activity is stimulated by microtubules, which promote homooligomerization. ATP-dependent microtubule severing is stimulated by interaction with KATNB1. In terms of biological role, catalytic subunit of a complex which severs microtubules in an ATP-dependent manner. Microtubule severing may promote rapid reorganization of cellular microtubule arrays and the release of microtubules from the centrosome following nucleation. Microtubule release from the mitotic spindle poles may allow depolymerization of the microtubule end proximal to the spindle pole, leading to poleward microtubule flux and poleward motion of chromosome. Microtubule release within the cell body of neurons may be required for their transport into neuronal processes by microtubule-dependent motor proteins. This transport is required for axonal growth. This chain is Katanin p60 ATPase-containing subunit A1 (Katna1), found in Rattus norvegicus (Rat).